Here is a 363-residue protein sequence, read N- to C-terminus: Putative dipeptidase YkvY (363 aa).

Residues Asp-222, Asp-233, His-297, Glu-326, and Glu-340 each contribute to the Mn(2+) site.

It belongs to the peptidase M24B family. Requires Mn(2+) as cofactor.

This is Putative dipeptidase YkvY (ykvY) from Bacillus subtilis (strain 168).